A 319-amino-acid polypeptide reads, in one-letter code: 7,8-didemethyl-8-hydroxy-5-deazariboflavin synthase (319 aa).

The Radical SAM core domain occupies 5-236 (VTYSPAYTIV…SNITLQIPPN (232 aa)). Cys-19, Cys-23, and Cys-26 together coordinate [4Fe-4S] cluster.

Belongs to the radical SAM superfamily. CofG family. In terms of assembly, consists of two subunits, CofG and CofH. [4Fe-4S] cluster serves as cofactor.

The enzyme catalyses 5-amino-5-(4-hydroxybenzyl)-6-(D-ribitylimino)-5,6-dihydrouracil + S-adenosyl-L-methionine = 7,8-didemethyl-8-hydroxy-5-deazariboflavin + 5'-deoxyadenosine + L-methionine + NH4(+) + H(+). Its pathway is cofactor biosynthesis; coenzyme F0 biosynthesis. Catalyzes the radical-mediated synthesis of 7,8-didemethyl-8-hydroxy-5-deazariboflavin from 5-amino-5-(4-hydroxybenzyl)-6-(D-ribitylimino)-5,6-dihydrouracil. The polypeptide is 7,8-didemethyl-8-hydroxy-5-deazariboflavin synthase (Trichodesmium erythraeum (strain IMS101)).